A 421-amino-acid polypeptide reads, in one-letter code: 4-hydroxy-3-methylbut-2-en-1-yl diphosphate synthase (flavodoxin) (421 aa).

4 residues coordinate [4Fe-4S] cluster: C311, C314, C357, and E364.

The protein belongs to the IspG family. [4Fe-4S] cluster is required as a cofactor.

It catalyses the reaction (2E)-4-hydroxy-3-methylbut-2-enyl diphosphate + oxidized [flavodoxin] + H2O + 2 H(+) = 2-C-methyl-D-erythritol 2,4-cyclic diphosphate + reduced [flavodoxin]. The protein operates within isoprenoid biosynthesis; isopentenyl diphosphate biosynthesis via DXP pathway; isopentenyl diphosphate from 1-deoxy-D-xylulose 5-phosphate: step 5/6. Converts 2C-methyl-D-erythritol 2,4-cyclodiphosphate (ME-2,4cPP) into 1-hydroxy-2-methyl-2-(E)-butenyl 4-diphosphate. This chain is 4-hydroxy-3-methylbut-2-en-1-yl diphosphate synthase (flavodoxin), found in Xanthomonas euvesicatoria pv. vesicatoria (strain 85-10) (Xanthomonas campestris pv. vesicatoria).